We begin with the raw amino-acid sequence, 410 residues long: Tegument protein VP16 homolog (410 aa).

The tract at residues 388 to 410 (PPSPSEILPGDPPRPPTCGFLTR) is disordered.

Belongs to the herpesviridae tegument protein VP16 protein family. Associates with the VP16-induced complex; binding to host HCFC1 activates VP16 for association with the octamer motif-binding host protein POU2F1, to form a multiprotein-DNA complex responsible for activating transcription of the viral immediate early genes.

The protein resides in the virion tegument. The protein localises to the host nucleus. In terms of biological role, transcriptional activator of immediate-early (IE) gene products (alpha genes). Acts as a key activator of lytic infection by initiating the lytic program through the assembly of the transcriptional regulatory VP16-induced complex composed of VP16 and two cellular factors, HCFC1 and POU2F1. VP16-induced complex represents a regulatory switch: when it is on, it promotes IE-gene expression and thus lytic infection, and when it is off, it limits IE-gene transcription favoring latent infection. May play a role in the aggregation of tegument proteins around nucleocapsids during virus morphogenesis. This chain is Tegument protein VP16 homolog, found in Varicella-zoster virus (strain Dumas) (HHV-3).